Consider the following 179-residue polypeptide: MAELSTVARPYAEALFSAARDDKAGLPAWADLIGELAQVAGNPDVREAMTDPRLGDAQRIELFTGLVKTQLPQAVRNFIELLVANDRLLLLPVIAKQFVALKNRHEGTAQAEITSAFELSDAQVKELIEALETKFGLKLKPSVTVDKSLIGGVRVAVGDQVLDTSVQAQLARLRDTLAA.

Belongs to the ATPase delta chain family. F-type ATPases have 2 components, F(1) - the catalytic core - and F(0) - the membrane proton channel. F(1) has five subunits: alpha(3), beta(3), gamma(1), delta(1), epsilon(1). F(0) has three main subunits: a(1), b(2) and c(10-14). The alpha and beta chains form an alternating ring which encloses part of the gamma chain. F(1) is attached to F(0) by a central stalk formed by the gamma and epsilon chains, while a peripheral stalk is formed by the delta and b chains.

The protein localises to the cell inner membrane. F(1)F(0) ATP synthase produces ATP from ADP in the presence of a proton or sodium gradient. F-type ATPases consist of two structural domains, F(1) containing the extramembraneous catalytic core and F(0) containing the membrane proton channel, linked together by a central stalk and a peripheral stalk. During catalysis, ATP synthesis in the catalytic domain of F(1) is coupled via a rotary mechanism of the central stalk subunits to proton translocation. In terms of biological role, this protein is part of the stalk that links CF(0) to CF(1). It either transmits conformational changes from CF(0) to CF(1) or is implicated in proton conduction. The protein is ATP synthase subunit delta of Bordetella petrii (strain ATCC BAA-461 / DSM 12804 / CCUG 43448).